Consider the following 390-residue polypeptide: Protein YghO (390 aa).

This Escherichia coli (strain K12) protein is Protein YghO (yghO).